The primary structure comprises 233 residues: Protein Thf1 (233 aa).

A coiled-coil region spans residues 183–204; that stretch reads DKFSKDLELYRSNLDKMTQALA. Residues 212-233 form a disordered region; it reads ADRKKREQRQQQASTPVAPPNE.

This sequence belongs to the THF1 family.

May be involved in photosynthetic membrane biogenesis. This chain is Protein Thf1, found in Nostoc sp. (strain PCC 7120 / SAG 25.82 / UTEX 2576).